The chain runs to 563 residues: Phosphomethylpyrimidine synthase (563 aa).

Residues Asn-180, Met-209, Tyr-238, His-274, 294–296, 335–338, and Glu-374 each bind substrate; these read SRG and DGLR. His-378 lines the Zn(2+) pocket. Residue Tyr-401 participates in substrate binding. A Zn(2+)-binding site is contributed by His-442. Residues Cys-522, Cys-525, and Cys-530 each contribute to the [4Fe-4S] cluster site.

It belongs to the ThiC family. It depends on [4Fe-4S] cluster as a cofactor.

It carries out the reaction 5-amino-1-(5-phospho-beta-D-ribosyl)imidazole + S-adenosyl-L-methionine = 4-amino-2-methyl-5-(phosphooxymethyl)pyrimidine + CO + 5'-deoxyadenosine + formate + L-methionine + 3 H(+). Its pathway is cofactor biosynthesis; thiamine diphosphate biosynthesis. In terms of biological role, catalyzes the synthesis of the hydroxymethylpyrimidine phosphate (HMP-P) moiety of thiamine from aminoimidazole ribotide (AIR) in a radical S-adenosyl-L-methionine (SAM)-dependent reaction. The polypeptide is Phosphomethylpyrimidine synthase (Geobacillus thermodenitrificans (strain NG80-2)).